Here is a 127-residue protein sequence, read N- to C-terminus: Large ribosomal subunit protein uL18 (127 aa).

Positions 1–26 (MASTLTVRKSLSDRAKARARRQARGR) are disordered. A compositionally biased stretch (basic residues) spans 17–26 (ARARRQARGR).

It belongs to the universal ribosomal protein uL18 family. As to quaternary structure, part of the 50S ribosomal subunit; part of the 5S rRNA/L5/L18/L25 subcomplex. Contacts the 5S and 23S rRNAs.

In terms of biological role, this is one of the proteins that bind and probably mediate the attachment of the 5S RNA into the large ribosomal subunit, where it forms part of the central protuberance. The polypeptide is Large ribosomal subunit protein uL18 (Cutibacterium acnes (strain DSM 16379 / KPA171202) (Propionibacterium acnes)).